The following is a 1770-amino-acid chain: Transposon Ty2-F Gag-Pol polyprotein (1770 aa).

3 stretches are compositionally biased toward polar residues: residues 1 to 11, 19 to 39, and 49 to 60; these read MESQQLHQNPH, ASVTSKEVPSNQDPLAVSASN, and KVNSQQETTPGT. 2 disordered regions span residues 1 to 86 and 359 to 453; these read MESQ…GQYQ and QHSE…LPDH. An RNA-binding region spans residues 295–397; sequence ENNINVSDRL…SSKPRAAKAH (103 aa). The segment covering 369–381 has biased composition (low complexity); it reads TSPNTTNTKVTTR. Composition is skewed to polar residues over residues 399-408 and 415-435; these read IATSSKFSRV and ESTVSSQYLSDDNELSLGQQQ. Asp457 functions as the For protease activity; shared with dimeric partner in the catalytic mechanism. The segment at 579 to 636 is integrase-type zinc finger-like; that stretch reads NVNKSKSVNKYPYPLIHRMLGHANFRSIQKSLKKNAVTYLKESDIEWSNASTYQCPDC. Positions 656-831 constitute an Integrase catalytic domain; the sequence is ESYEPFQYLH…AGLDITTILP (176 aa). The Mg(2+) site is built by Asp667 and Asp732. Disordered stretches follow at residues 1004 to 1034, 1059 to 1135, 1146 to 1165, and 1170 to 1205; these read MGGTVESDTTSPRHSSTFTARNQNRPGSTNE, TEEP…KSSK, LPLPDLTHKSPTDTSDVSKD, and HSRQTNSSLGGMDDSNVLTTTKSKKRSLEDNETEIE. 2 stretches are compositionally biased toward polar residues: residues 1009 to 1034 and 1065 to 1082; these read ESDTTSPRHSSTFTARNQNRPGSTNE and QRNSDTNIKYRTTNSTPS. Over residues 1151 to 1165 the composition is skewed to basic and acidic residues; it reads LTHKSPTDTSDVSKD. The Bipartite nuclear localization signal signature appears at 1193-1227; sequence KKRSLEDNETEIEVSRDTWNNKNMRSLEPPRSKKR. In terms of domain architecture, Reverse transcriptase Ty1/copia-type spans 1353 to 1491; sequence NDYYITQLDI…DILGLEIKYQ (139 aa). Mg(2+) is bound by residues Asp1361, Asp1442, Asp1443, Asp1625, Glu1667, and Asp1700. Positions 1625–1767 constitute an RNase H Ty1/copia-type domain; sequence DASYGNQPYY…IKTFKLLTNK (143 aa).

In terms of assembly, the capsid protein forms a homotrimer, from which the VLPs are assembled. The protease is a homodimer, whose active site consists of two apposed aspartic acid residues. Post-translationally, initially, virus-like particles (VLPs) are composed of the structural unprocessed proteins Gag and Gag-Pol, and also contain the host initiator methionine tRNA (tRNA(i)-Met) which serves as a primer for minus-strand DNA synthesis, and a dimer of genomic Ty RNA. Processing of the polyproteins occurs within the particle and proceeds by an ordered pathway, called maturation. First, the protease (PR) is released by autocatalytic cleavage of the Gag-Pol polyprotein, and this cleavage is a prerequisite for subsequent processing at the remaining sites to release the mature structural and catalytic proteins. Maturation takes place prior to the RT reaction and is required to produce transposition-competent VLPs.

Its subcellular location is the cytoplasm. The protein localises to the nucleus. It catalyses the reaction DNA(n) + a 2'-deoxyribonucleoside 5'-triphosphate = DNA(n+1) + diphosphate. The enzyme catalyses Endonucleolytic cleavage to 5'-phosphomonoester.. Its function is as follows. Capsid protein (CA) is the structural component of the virus-like particle (VLP), forming the shell that encapsulates the retrotransposons dimeric RNA genome. The particles are assembled from trimer-clustered units and there are holes in the capsid shells that allow for the diffusion of macromolecules. CA also has nucleocapsid-like chaperone activity, promoting primer tRNA(i)-Met annealing to the multipartite primer-binding site (PBS), dimerization of Ty2 RNA and initiation of reverse transcription. The aspartyl protease (PR) mediates the proteolytic cleavages of the Gag and Gag-Pol polyproteins after assembly of the VLP. In terms of biological role, reverse transcriptase/ribonuclease H (RT) is a multifunctional enzyme that catalyzes the conversion of the retro-elements RNA genome into dsDNA within the VLP. The enzyme displays a DNA polymerase activity that can copy either DNA or RNA templates, and a ribonuclease H (RNase H) activity that cleaves the RNA strand of RNA-DNA heteroduplexes during plus-strand synthesis and hydrolyzes RNA primers. The conversion leads to a linear dsDNA copy of the retrotransposon that includes long terminal repeats (LTRs) at both ends. Functionally, integrase (IN) targets the VLP to the nucleus, where a subparticle preintegration complex (PIC) containing at least integrase and the newly synthesized dsDNA copy of the retrotransposon must transit the nuclear membrane. Once in the nucleus, integrase performs the integration of the dsDNA into the host genome. In Saccharomyces cerevisiae (strain ATCC 204508 / S288c) (Baker's yeast), this protein is Transposon Ty2-F Gag-Pol polyprotein (TY2B-F).